The chain runs to 397 residues: S-adenosylmethionine synthase (397 aa).

Position 15 (His15) interacts with ATP. Asp17 lines the Mg(2+) pocket. K(+) is bound at residue Glu43. Glu56 and Gln99 together coordinate L-methionine. Positions 99–109 are flexible loop; that stretch reads QSPDIAMGVNK. ATP contacts are provided by residues 175–177, 241–242, Asp250, 256–257, Ala273, and Lys277; these read DGK, RF, and RK. L-methionine is bound at residue Asp250. Lys281 provides a ligand contact to L-methionine.

Belongs to the AdoMet synthase family. As to quaternary structure, homotetramer; dimer of dimers. Mg(2+) is required as a cofactor. The cofactor is K(+).

It localises to the cytoplasm. It carries out the reaction L-methionine + ATP + H2O = S-adenosyl-L-methionine + phosphate + diphosphate. The protein operates within amino-acid biosynthesis; S-adenosyl-L-methionine biosynthesis; S-adenosyl-L-methionine from L-methionine: step 1/1. Its function is as follows. Catalyzes the formation of S-adenosylmethionine (AdoMet) from methionine and ATP. The overall synthetic reaction is composed of two sequential steps, AdoMet formation and the subsequent tripolyphosphate hydrolysis which occurs prior to release of AdoMet from the enzyme. The polypeptide is S-adenosylmethionine synthase (Acetivibrio thermocellus (strain ATCC 27405 / DSM 1237 / JCM 9322 / NBRC 103400 / NCIMB 10682 / NRRL B-4536 / VPI 7372) (Clostridium thermocellum)).